Here is a 69-residue protein sequence, read N- to C-terminus: Ribosome modulation factor (69 aa).

The protein belongs to the ribosome modulation factor family.

It localises to the cytoplasm. Functionally, during stationary phase, converts 70S ribosomes to an inactive dimeric form (100S ribosomes). In Marinomonas mediterranea (strain ATCC 700492 / JCM 21426 / NBRC 103028 / MMB-1), this protein is Ribosome modulation factor.